Consider the following 292-residue polypeptide: Acetyl-coenzyme A carboxylase carboxyl transferase subunit beta (292 aa).

Residues 29–292 (LWVKCSECGQ…HGVKELVQTN (264 aa)) form the CoA carboxyltransferase N-terminal domain. Zn(2+) is bound by residues C33, C36, C52, and C55. The C4-type zinc-finger motif lies at 33–55 (CSECGQVAYRKDLISNFNVCSNC).

It belongs to the AccD/PCCB family. As to quaternary structure, acetyl-CoA carboxylase is a heterohexamer composed of biotin carboxyl carrier protein (AccB), biotin carboxylase (AccC) and two subunits each of ACCase subunit alpha (AccA) and ACCase subunit beta (AccD). It depends on Zn(2+) as a cofactor.

The protein localises to the cytoplasm. It catalyses the reaction N(6)-carboxybiotinyl-L-lysyl-[protein] + acetyl-CoA = N(6)-biotinyl-L-lysyl-[protein] + malonyl-CoA. It functions in the pathway lipid metabolism; malonyl-CoA biosynthesis; malonyl-CoA from acetyl-CoA: step 1/1. In terms of biological role, component of the acetyl coenzyme A carboxylase (ACC) complex. Biotin carboxylase (BC) catalyzes the carboxylation of biotin on its carrier protein (BCCP) and then the CO(2) group is transferred by the transcarboxylase to acetyl-CoA to form malonyl-CoA. The chain is Acetyl-coenzyme A carboxylase carboxyl transferase subunit beta from Prochlorococcus marinus subsp. pastoris (strain CCMP1986 / NIES-2087 / MED4).